Here is an 80-residue protein sequence, read N- to C-terminus: Small ribosomal subunit protein bS16 (80 aa).

The protein belongs to the bacterial ribosomal protein bS16 family.

In Laribacter hongkongensis (strain HLHK9), this protein is Small ribosomal subunit protein bS16.